Here is a 103-residue protein sequence, read N- to C-terminus: Large ribosomal subunit protein bL21 (103 aa).

This sequence belongs to the bacterial ribosomal protein bL21 family. Part of the 50S ribosomal subunit. Contacts protein L20.

In terms of biological role, this protein binds to 23S rRNA in the presence of protein L20. This chain is Large ribosomal subunit protein bL21, found in Ralstonia pickettii (strain 12J).